The primary structure comprises 474 residues: MSKKLHIKTWGCQMNEYDSSKMADLLDDYQGYTLTEDASEADVLLLNTCSIREKAQEKVFHQLGRWKSLKDKNPNLIIGVGGCVASQEGKAIKDRAQCVDIIFGPQTLHRLPEMIEQIQRGEKAVIDISFPEIEKFDRLPEPRADGPTAFVSIMEGCSKYCSFCVVPYTRGEEVSRPLDDVILEVAQLAAQGVREVNLLGQNVNAYRGATHDDEICTFAELLRLVASIDGIDRLRFTTSHPIEFTQDIIDVYEDTPELVSFLHLPVQSGSDRILTQMKRGHMAIEYKSIIRRLRKARPDIQISSDFIIGFPGESKDDFADTMKLIEDVAFDHSFSFIYSARPGTPAADLPDDVSDEEKKQRLAILQDRITQQAMRYSRQMLGTVQRILVEGPSVKNPMELRGRTENSRVVNFEAAHTHIGSFVDVKIVDVYTNSLRGEFVRGENEMDLRRSLRPAEILAKHKQDDALGVTHFKP.

Residues 3–120 enclose the MTTase N-terminal domain; it reads KKLHIKTWGC…LPEMIEQIQR (118 aa). [4Fe-4S] cluster is bound by residues Cys12, Cys49, Cys83, Cys157, Cys161, and Cys164. A Radical SAM core domain is found at 143–375; it reads RADGPTAFVS…QDRITQQAMR (233 aa). A TRAM domain is found at 378–441; the sequence is RQMLGTVQRI…TNSLRGEFVR (64 aa).

It belongs to the methylthiotransferase family. MiaB subfamily. Monomer. [4Fe-4S] cluster serves as cofactor.

It is found in the cytoplasm. The catalysed reaction is N(6)-dimethylallyladenosine(37) in tRNA + (sulfur carrier)-SH + AH2 + 2 S-adenosyl-L-methionine = 2-methylsulfanyl-N(6)-dimethylallyladenosine(37) in tRNA + (sulfur carrier)-H + 5'-deoxyadenosine + L-methionine + A + S-adenosyl-L-homocysteine + 2 H(+). Its function is as follows. Catalyzes the methylthiolation of N6-(dimethylallyl)adenosine (i(6)A), leading to the formation of 2-methylthio-N6-(dimethylallyl)adenosine (ms(2)i(6)A) at position 37 in tRNAs that read codons beginning with uridine. In Shewanella frigidimarina (strain NCIMB 400), this protein is tRNA-2-methylthio-N(6)-dimethylallyladenosine synthase.